The primary structure comprises 264 residues: 3-methyl-2-oxobutanoate hydroxymethyltransferase (264 aa).

Mg(2+) is bound by residues aspartate 45 and aspartate 84. 3-methyl-2-oxobutanoate is bound by residues 45–46 (DS), aspartate 84, and lysine 112. A Mg(2+)-binding site is contributed by glutamate 114. Glutamate 181 acts as the Proton acceptor in catalysis.

The protein belongs to the PanB family. In terms of assembly, homodecamer; pentamer of dimers. Requires Mg(2+) as cofactor.

It localises to the cytoplasm. The enzyme catalyses 3-methyl-2-oxobutanoate + (6R)-5,10-methylene-5,6,7,8-tetrahydrofolate + H2O = 2-dehydropantoate + (6S)-5,6,7,8-tetrahydrofolate. It participates in cofactor biosynthesis; (R)-pantothenate biosynthesis; (R)-pantoate from 3-methyl-2-oxobutanoate: step 1/2. In terms of biological role, catalyzes the reversible reaction in which hydroxymethyl group from 5,10-methylenetetrahydrofolate is transferred onto alpha-ketoisovalerate to form ketopantoate. The protein is 3-methyl-2-oxobutanoate hydroxymethyltransferase of Escherichia coli O17:K52:H18 (strain UMN026 / ExPEC).